We begin with the raw amino-acid sequence, 476 residues long: Aspartyl/glutamyl-tRNA(Asn/Gln) amidotransferase subunit B (476 aa).

The protein belongs to the GatB/GatE family. GatB subfamily. In terms of assembly, heterotrimer of A, B and C subunits.

The enzyme catalyses L-glutamyl-tRNA(Gln) + L-glutamine + ATP + H2O = L-glutaminyl-tRNA(Gln) + L-glutamate + ADP + phosphate + H(+). The catalysed reaction is L-aspartyl-tRNA(Asn) + L-glutamine + ATP + H2O = L-asparaginyl-tRNA(Asn) + L-glutamate + ADP + phosphate + 2 H(+). Allows the formation of correctly charged Asn-tRNA(Asn) or Gln-tRNA(Gln) through the transamidation of misacylated Asp-tRNA(Asn) or Glu-tRNA(Gln) in organisms which lack either or both of asparaginyl-tRNA or glutaminyl-tRNA synthetases. The reaction takes place in the presence of glutamine and ATP through an activated phospho-Asp-tRNA(Asn) or phospho-Glu-tRNA(Gln). In Neisseria gonorrhoeae (strain ATCC 700825 / FA 1090), this protein is Aspartyl/glutamyl-tRNA(Asn/Gln) amidotransferase subunit B.